An 81-amino-acid chain; its full sequence is Large ribosomal subunit protein bL31B (81 aa).

Belongs to the bacterial ribosomal protein bL31 family. Type B subfamily. In terms of assembly, part of the 50S ribosomal subunit.

This is Large ribosomal subunit protein bL31B from Borreliella burgdorferi (strain ATCC 35210 / DSM 4680 / CIP 102532 / B31) (Borrelia burgdorferi).